A 475-amino-acid polypeptide reads, in one-letter code: Aspartyl/glutamyl-tRNA(Asn/Gln) amidotransferase subunit B (475 aa).

It belongs to the GatB/GatE family. GatB subfamily. Heterotrimer of A, B and C subunits.

The enzyme catalyses L-glutamyl-tRNA(Gln) + L-glutamine + ATP + H2O = L-glutaminyl-tRNA(Gln) + L-glutamate + ADP + phosphate + H(+). It catalyses the reaction L-aspartyl-tRNA(Asn) + L-glutamine + ATP + H2O = L-asparaginyl-tRNA(Asn) + L-glutamate + ADP + phosphate + 2 H(+). Its function is as follows. Allows the formation of correctly charged Asn-tRNA(Asn) or Gln-tRNA(Gln) through the transamidation of misacylated Asp-tRNA(Asn) or Glu-tRNA(Gln) in organisms which lack either or both of asparaginyl-tRNA or glutaminyl-tRNA synthetases. The reaction takes place in the presence of glutamine and ATP through an activated phospho-Asp-tRNA(Asn) or phospho-Glu-tRNA(Gln). In Hydrogenovibrio crunogenus (strain DSM 25203 / XCL-2) (Thiomicrospira crunogena), this protein is Aspartyl/glutamyl-tRNA(Asn/Gln) amidotransferase subunit B.